The following is a 525-amino-acid chain: Chromosomal replication initiator protein DnaA (525 aa).

The interval 1 to 71 (MNDFWQHCSA…SDLAREFWNT (71 aa)) is domain I, interacts with DnaA modulators. Positions 71 to 188 (TPIEVQFVLD…GEADSMYERS (118 aa)) are domain II. The tract at residues 160-182 (AAAGRRTWRPGPGAAPANGGEAD) is disordered. Over residues 169 to 181 (PGPGAAPANGGEA) the composition is skewed to low complexity. Residues 189-405 (KLNPVLTFDN…GALRKILAYS (217 aa)) form a domain III, AAA+ region region. ATP contacts are provided by Gly-233, Gly-235, Lys-236, and Thr-237. The segment at 406–525 (KFHGREISIE…LHVLEQTLKG (120 aa)) is domain IV, binds dsDNA.

This sequence belongs to the DnaA family. In terms of assembly, oligomerizes as a right-handed, spiral filament on DNA at oriC.

The protein resides in the cytoplasm. Functionally, plays an essential role in the initiation and regulation of chromosomal replication. ATP-DnaA binds to the origin of replication (oriC) to initiate formation of the DNA replication initiation complex once per cell cycle. Binds the DnaA box (a 9 base pair repeat at the origin) and separates the double-stranded (ds)DNA. Forms a right-handed helical filament on oriC DNA; dsDNA binds to the exterior of the filament while single-stranded (ss)DNA is stabiized in the filament's interior. The ATP-DnaA-oriC complex binds and stabilizes one strand of the AT-rich DNA unwinding element (DUE), permitting loading of DNA polymerase. After initiation quickly degrades to an ADP-DnaA complex that is not apt for DNA replication. Binds acidic phospholipids. The protein is Chromosomal replication initiator protein DnaA of Burkholderia orbicola (strain MC0-3).